We begin with the raw amino-acid sequence, 132 residues long: U-scoloptoxin(11)-Sa1a (132 aa).

The N-terminal stretch at 1–19 (MIRFFAFVLFFATQELILC) is a signal peptide.

Belongs to the scoloptoxin-11 family. Post-translationally, contains 5 disulfide bonds. As to expression, expressed by the venom gland.

It localises to the secreted. In Scolopendra alternans (Florida Keys giant centipede), this protein is U-scoloptoxin(11)-Sa1a.